We begin with the raw amino-acid sequence, 100 residues long: Urease subunit gamma (100 aa).

The protein belongs to the urease gamma subunit family. As to quaternary structure, heterotrimer of UreA (gamma), UreB (beta) and UreC (alpha) subunits. Three heterotrimers associate to form the active enzyme.

Its subcellular location is the cytoplasm. The enzyme catalyses urea + 2 H2O + H(+) = hydrogencarbonate + 2 NH4(+). It functions in the pathway nitrogen metabolism; urea degradation; CO(2) and NH(3) from urea (urease route): step 1/1. This is Urease subunit gamma from Bordetella pertussis (strain Tohama I / ATCC BAA-589 / NCTC 13251).